We begin with the raw amino-acid sequence, 100 residues long: Small ribosomal subunit protein uS14c (100 aa).

Belongs to the universal ribosomal protein uS14 family. In terms of assembly, part of the 30S ribosomal subunit.

It is found in the plastid. The protein resides in the chloroplast. Functionally, binds 16S rRNA, required for the assembly of 30S particles. This is Small ribosomal subunit protein uS14c from Cyanidium caldarium (Red alga).